A 238-amino-acid chain; its full sequence is Ribonuclease PH (238 aa).

Phosphate is bound by residues arginine 86 and 124–126; that span reads GTR.

It belongs to the RNase PH family. Homohexameric ring arranged as a trimer of dimers.

The enzyme catalyses tRNA(n+1) + phosphate = tRNA(n) + a ribonucleoside 5'-diphosphate. Functionally, phosphorolytic 3'-5' exoribonuclease that plays an important role in tRNA 3'-end maturation. Removes nucleotide residues following the 3'-CCA terminus of tRNAs; can also add nucleotides to the ends of RNA molecules by using nucleoside diphosphates as substrates, but this may not be physiologically important. Probably plays a role in initiation of 16S rRNA degradation (leading to ribosome degradation) during starvation. The chain is Ribonuclease PH from Geobacter metallireducens (strain ATCC 53774 / DSM 7210 / GS-15).